The following is a 57-amino-acid chain: Large ribosomal subunit protein uL30 (57 aa).

Belongs to the universal ribosomal protein uL30 family. As to quaternary structure, part of the 50S ribosomal subunit.

The polypeptide is Large ribosomal subunit protein uL30 (Maridesulfovibrio salexigens (strain ATCC 14822 / DSM 2638 / NCIMB 8403 / VKM B-1763) (Desulfovibrio salexigens)).